The sequence spans 111 residues: Large ribosomal subunit protein uL22 (111 aa).

The protein belongs to the universal ribosomal protein uL22 family. Part of the 50S ribosomal subunit.

This protein binds specifically to 23S rRNA; its binding is stimulated by other ribosomal proteins, e.g. L4, L17, and L20. It is important during the early stages of 50S assembly. It makes multiple contacts with different domains of the 23S rRNA in the assembled 50S subunit and ribosome. In terms of biological role, the globular domain of the protein is located near the polypeptide exit tunnel on the outside of the subunit, while an extended beta-hairpin is found that lines the wall of the exit tunnel in the center of the 70S ribosome. The polypeptide is Large ribosomal subunit protein uL22 (Chlamydia pneumoniae (Chlamydophila pneumoniae)).